The sequence spans 392 residues: Galactokinase (392 aa).

37-40 (EHTD) contributes to the substrate binding site. Residues Ser71 and 128–134 (GSGLSSS) each bind ATP. The Mg(2+) site is built by Ser134 and Glu166. Asp178 acts as the Proton acceptor in catalysis. Tyr228 contributes to the substrate binding site.

This sequence belongs to the GHMP kinase family. GalK subfamily.

The protein resides in the cytoplasm. The enzyme catalyses alpha-D-galactose + ATP = alpha-D-galactose 1-phosphate + ADP + H(+). The protein operates within carbohydrate metabolism; galactose metabolism. In terms of biological role, catalyzes the transfer of the gamma-phosphate of ATP to D-galactose to form alpha-D-galactose-1-phosphate (Gal-1-P). The protein is Galactokinase of Streptococcus pneumoniae (strain ATCC BAA-255 / R6).